Reading from the N-terminus, the 211-residue chain is Protein-L-isoaspartate O-methyltransferase (211 aa).

Ser-60 is a catalytic residue.

This sequence belongs to the methyltransferase superfamily. L-isoaspartyl/D-aspartyl protein methyltransferase family.

It is found in the cytoplasm. The enzyme catalyses [protein]-L-isoaspartate + S-adenosyl-L-methionine = [protein]-L-isoaspartate alpha-methyl ester + S-adenosyl-L-homocysteine. In terms of biological role, catalyzes the methyl esterification of L-isoaspartyl residues in peptides and proteins that result from spontaneous decomposition of normal L-aspartyl and L-asparaginyl residues. It plays a role in the repair and/or degradation of damaged proteins. The protein is Protein-L-isoaspartate O-methyltransferase of Alteromonas mediterranea (strain DSM 17117 / CIP 110805 / LMG 28347 / Deep ecotype).